A 307-amino-acid chain; its full sequence is 17-beta-hydroxysteroid dehydrogenase type 3 (307 aa).

A helical membrane pass occupies residues 6–26; that stretch reads IIFVLTGTCAILVFGGKIASL. 47–76 contacts NADP(+); it reads GKWAVITGGSDGIGRAYAEELSKQGMSVII. S187 lines the substrate pocket. Y200 (proton acceptor) is an active-site residue.

This sequence belongs to the short-chain dehydrogenases/reductases (SDR) family. As to expression, expression shows strong sexual dimorphism. In female, highly expressed in ovaries, and at lower levels in skin muscle, eyes and liver. In males, strongly expressed in liver and at lower levels in testis, spleen, kidney, intestine and muscle.

It localises to the endoplasmic reticulum. The protein resides in the membrane. It catalyses the reaction a 17beta-hydroxy steroid + NADP(+) = a 17-oxo steroid + NADPH + H(+). The catalysed reaction is testosterone + NADP(+) = androst-4-ene-3,17-dione + NADPH + H(+). The enzyme catalyses 3beta-hydroxyandrost-5-en-17-one + NADPH + H(+) = androst-5-en-3beta,17beta-diol + NADP(+). It carries out the reaction 3beta-hydroxy-5alpha-androstan-17-one + NADPH + H(+) = 5alpha-androstane-3beta,17beta-diol + NADP(+). It catalyses the reaction androst-4-ene-3,11,17-trione + NADPH + H(+) = 17beta-hydroxyandrost-4-ene-3,11-dione + NADP(+). The catalysed reaction is 11beta-hydroxyandrost-4-ene-3,17-dione + NADPH + H(+) = 11beta,17beta-dihydroxyandrost-4-ene-3-one + NADP(+). It functions in the pathway hormone biosynthesis; testosterone biosynthesis. It participates in steroid metabolism. In terms of biological role, catalyzes the conversion of 17-oxosteroids to 17beta-hydroxysteroids in the presence of NADPH. Favors the reduction of androstenedione to testosterone. Testosterone is the key androgen driving male development and function. Among further tested androgens epiandrosterone and dehydroepiandrosterone are accepted as substrates and reduced at C-17. Can also reduce 11-ketoandrostenedione as well as 11beta-hydroxyandrostenedione at C-17 to the respective testosterone forms. Cannot use androsterone and androstanedione as substrates. This chain is 17-beta-hydroxysteroid dehydrogenase type 3 (hsd17b3), found in Danio rerio (Zebrafish).